We begin with the raw amino-acid sequence, 164 residues long: Crossover junction endodeoxyribonuclease RuvC (164 aa).

Active-site residues include aspartate 7, glutamate 67, and aspartate 139. Residues aspartate 7, glutamate 67, and aspartate 139 each coordinate Mg(2+).

Belongs to the RuvC family. Homodimer which binds Holliday junction (HJ) DNA. The HJ becomes 2-fold symmetrical on binding to RuvC with unstacked arms; it has a different conformation from HJ DNA in complex with RuvA. In the full resolvosome a probable DNA-RuvA(4)-RuvB(12)-RuvC(2) complex forms which resolves the HJ. It depends on Mg(2+) as a cofactor.

Its subcellular location is the cytoplasm. The catalysed reaction is Endonucleolytic cleavage at a junction such as a reciprocal single-stranded crossover between two homologous DNA duplexes (Holliday junction).. Its function is as follows. The RuvA-RuvB-RuvC complex processes Holliday junction (HJ) DNA during genetic recombination and DNA repair. Endonuclease that resolves HJ intermediates. Cleaves cruciform DNA by making single-stranded nicks across the HJ at symmetrical positions within the homologous arms, yielding a 5'-phosphate and a 3'-hydroxyl group; requires a central core of homology in the junction. The consensus cleavage sequence is 5'-(A/T)TT(C/G)-3'. Cleavage occurs on the 3'-side of the TT dinucleotide at the point of strand exchange. HJ branch migration catalyzed by RuvA-RuvB allows RuvC to scan DNA until it finds its consensus sequence, where it cleaves and resolves the cruciform DNA. This is Crossover junction endodeoxyribonuclease RuvC from Citrifermentans bemidjiense (strain ATCC BAA-1014 / DSM 16622 / JCM 12645 / Bem) (Geobacter bemidjiensis).